Here is a 262-residue protein sequence, read N- to C-terminus: E3 ubiquitin-protein ligase NEURL3 (262 aa).

One can recognise an NHR domain in the interval 17 to 173 (ALRFHAEAKG…TTKAIELLDP (157 aa)). Residues 202-241 (CAICFYHAANTRLVPCGHTYFCRYCAWRVFSDTAKCPVCR) form an RING-type zinc finger.

As to quaternary structure, (Microbial infection) Interacts with hepatitis C virus protein E1; this interaction prevents E1 interaction with E2 and subsequently inhibits viral infection.

It is found in the cytoplasm. The catalysed reaction is S-ubiquitinyl-[E2 ubiquitin-conjugating enzyme]-L-cysteine + [acceptor protein]-L-lysine = [E2 ubiquitin-conjugating enzyme]-L-cysteine + N(6)-ubiquitinyl-[acceptor protein]-L-lysine.. It functions in the pathway protein modification; protein ubiquitination. In terms of biological role, E3 ubiquitin-protein ligase that plays a role in various biological processes such as lung development or innate immunity. Seems to utilize UBE2E1. Promotes innate antiviral response by catalyzing 'Lys-63'-linked ubiquitination of IRF7. Also inhibits hepatitis C virus assembly by directly binding to viral E1 envelope glycoprotein to disrupt its interaction with E2. Plays an essential role in TLR4-mediated activation of MAPK pathways by promoting 'Lys-48'-linked polyubiquitination of the phosphatase DUSP1/MKP1. This is E3 ubiquitin-protein ligase NEURL3 (NEURL3) from Homo sapiens (Human).